A 208-amino-acid polypeptide reads, in one-letter code: High frequency lysogenization protein HflD homolog (208 aa).

The protein belongs to the HflD family.

It localises to the cytoplasm. It is found in the cell inner membrane. This Yersinia pestis bv. Antiqua (strain Nepal516) protein is High frequency lysogenization protein HflD homolog.